A 227-amino-acid chain; its full sequence is DNA utilization protein YhgH (227 aa).

The protein belongs to the ComF/GntX family.

Its function is as follows. Required for the use of extracellular DNA as a nutrient. Has been suggested to be involved in gluconate metabolism. This chain is DNA utilization protein YhgH, found in Escherichia coli (strain K12).